The primary structure comprises 382 residues: Glutaminyl-peptide cyclotransferase-like protein (382 aa).

A helical transmembrane segment spans residues 35–55; it reads LLPLLLALAVGSAFYTIWSGW. Cys-167 and Cys-191 are disulfide-bonded. Residue Asp-186 participates in Zn(2+) binding. The Proton acceptor role is filled by Glu-225. Residue Glu-226 participates in Zn(2+) binding. The active-site Proton acceptor is Asp-269. His-351 contacts Zn(2+).

This sequence belongs to the glutaminyl-peptide cyclotransferase family.

The protein resides in the golgi apparatus membrane. The catalysed reaction is N-terminal L-glutaminyl-[peptide] = N-terminal 5-oxo-L-prolyl-[peptide] + NH4(+). Functionally, responsible for the biosynthesis of pyroglutamyl peptides. This is Glutaminyl-peptide cyclotransferase-like protein (QPCTL) from Homo sapiens (Human).